Consider the following 204-residue polypeptide: Imidazoleglycerol-phosphate dehydratase (204 aa).

The disordered stretch occupies residues 183–204 (DPRMDGITPSTKGTLSESGDSQ). Residues 190–204 (TPSTKGTLSESGDSQ) are compositionally biased toward polar residues.

Belongs to the imidazoleglycerol-phosphate dehydratase family.

It is found in the cytoplasm. The catalysed reaction is D-erythro-1-(imidazol-4-yl)glycerol 3-phosphate = 3-(imidazol-4-yl)-2-oxopropyl phosphate + H2O. The protein operates within amino-acid biosynthesis; L-histidine biosynthesis; L-histidine from 5-phospho-alpha-D-ribose 1-diphosphate: step 6/9. In Alcanivorax borkumensis (strain ATCC 700651 / DSM 11573 / NCIMB 13689 / SK2), this protein is Imidazoleglycerol-phosphate dehydratase.